The sequence spans 506 residues: CDK5 regulatory subunit-associated protein 3 (506 aa).

3 consecutive short sequence motifs (shuffled ATG8-binding motif) follow at residues 267–270 (IDWG), 292–295 (IDWG), and 310–313 (IDWG). The tract at residues 269–506 (WGDFGVEAVS…RPVNLMGTSL (238 aa)) is required for interaction with UFL1 and mediates interaction with CHEK1. Positions 355–370 (DELMELEIFLARRAVE) are RPL10a-binding domain (RBD). A Glycyl lysine isopeptide (Lys-Gly) (interchain with G-Cter in SUMO2) cross-link involves residue K450.

Belongs to the CDK5RAP3 family. As to quaternary structure, substrate adapter component of the UFM1 ribosome E3 ligase (UREL) complex, composed of UFL1, DDRGK1 and CDK5RAP3. Interaction with UFL1 anchors CDK5RAP3 in the cytoplasm, preventing its translocation to the nucleus which allows expression of the CCND1 cyclin and progression of cells through the G1/S transition. Interacts with ATG8 family proteins MAP1LC3A, MAP1LC3B, GABARAP, GABARAPL1 and GABARAPL2. Interacts with CDK5R1; competes with CDK5RAP1 and CDK5RAP2. Interacts with RELA. Interacts with CHEK1; may negatively regulate CHEK1 and thereby stimulate entry into mitosis. Interacts with CDKN2A/ARF and MDM2; forms a ternary complex involved in regulation of p53/TP53. Interacts with MAPK14. Interacts with CCNB1. Interacts with TUBG1; may regulate CDK5RAP3 in mitotic G2/M transition checkpoint. May be phosphorylated by CDK5. In terms of processing, ubiquitinated. Probably triggers proteasomal degradation and is negatively regulated by UFL1. Post-translationally, may be ufmylated. Cleaved by caspases early during apoptosis, the resulting peptides may play a role in rupture of the nuclear envelope.

The protein localises to the endoplasmic reticulum membrane. It is found in the cytoplasm. Its subcellular location is the nucleus. It localises to the cytoskeleton. The protein resides in the microtubule organizing center. The protein localises to the centrosome. In terms of biological role, substrate adapter of E3 ligase complexes mediating ufmylation, the covalent attachment of the ubiquitin-like modifier UFM1 to substrate proteins, and which is involved in various processes, such as ribosome recycling and reticulophagy (also called ER-phagy). As part of the UREL complex, plays a key role in ribosome recycling by promoting mono-ufmylation of RPL26/uL24 subunit of the 60S ribosome. Ufmylation of RPL26/uL24 occurs on free 60S ribosomes following ribosome dissociation: it weakens the junction between post-termination 60S subunits and SEC61 translocons, promoting release and recycling of the large ribosomal subunit from the endoplasmic reticulum membrane. Ufmylation of RPL26/uL24 and subsequent 60S ribosome recycling either take place after normal termination of translation or after ribosome stalling during cotranslational translocation at the endoplasmic reticulum. Within the UREL complex, CDK5RAP3 acts as a substrate adapter that constrains UFL1 ligase activity to mono-ufmylate RPL26/uL24 at 'Lys-134'. The UREL complex is also involved in reticulophagy in response to endoplasmic reticulum stress by promoting ufmylation of proteins such as CYB5R3, thereby promoting lysosomal degradation of ufmylated proteins. Also acts as a regulator of transcription: negatively regulates NF-kappa-B-mediated gene transcription through the control of RELA phosphorylation. Also regulates mitotic G2/M transition checkpoint and mitotic G2 DNA damage checkpoint. Through its interaction with CDKN2A/ARF and MDM2 may induce MDM2-dependent p53/TP53 ubiquitination, stabilization and activation in the nucleus, thereby promoting G1 cell cycle arrest and inhibition of cell proliferation. May also play a role in the rupture of the nuclear envelope during apoptosis. May regulate MAPK14 activity by regulating its dephosphorylation by PPM1D/WIP1. Required for liver development. This Pongo abelii (Sumatran orangutan) protein is CDK5 regulatory subunit-associated protein 3.